We begin with the raw amino-acid sequence, 357 residues long: MEKYEKIGKIGEGSYGVVFKCRNRDTGQIVAIKKFLESEDDPVIKKIALREIRMLKQLKHPNLVNLLEVFRRKRRLHLVFEYCDHTVLHELDRYQRGVPEHLVKSITWQTLQAVNFCHKHNCIHRDVKPENILITKHSVIKLCDFGFARLLTGPSDYYTDYVATRWYRSPELLVGDTQYGPPVDVWAIGCVFAELLSGVPLWPGKSDVDQLYLIRKTLGDLIPRHQQVFSTNQYFSGVKIPDPEDMEPLELKFPNISYPALGLLKGCLHMDPTQRLTCEQLLHHPYFENIREIEDLAKEHNKPTRKTLRKSRKHHCFTETSKLQYLPQLTGSSILPALDNKKYYCDTKKLNYRFPNI.

The 284-residue stretch at 4–287 (YEKIGKIGEG…CEQLLHHPYF (284 aa)) folds into the Protein kinase domain. ATP-binding positions include 10-18 (IGEGSYGVV) and K33. The [NKR]KIAxRE signature appears at 45–51 (KKIALRE). D126 functions as the Proton acceptor in the catalytic mechanism.

The protein belongs to the protein kinase superfamily. CMGC Ser/Thr protein kinase family. CDC2/CDKX subfamily. As to expression, highly expressed in kidney, and to a lower extent in ovary.

Its subcellular location is the cytoplasm. It is found in the nucleus. It catalyses the reaction L-seryl-[protein] + ATP = O-phospho-L-seryl-[protein] + ADP + H(+). The enzyme catalyses L-threonyl-[protein] + ATP = O-phospho-L-threonyl-[protein] + ADP + H(+). The protein is Cyclin-dependent kinase-like 1 of Homo sapiens (Human).